Reading from the N-terminus, the 449-residue chain is Sensor protein QseC (449 aa).

The Cytoplasmic segment spans residues 1–12 (MKLTQRLSLRVR). Residues 13 to 33 (LTLIFLILVSITWAISSFVAW) form a helical membrane-spanning segment. Residues 34-161 (RKTTDNVDEL…REDMALAIVA (128 aa)) lie on the Periplasmic side of the membrane. A helical transmembrane segment spans residues 162 to 182 (AQLTPWLIALPFMLLILLLLL). Residues 183-235 (HRELRPLKKLAQALRFRSPESETPLDAKGVPSEVRPLVEALNQLFSRIHSMMV) enclose the HAMP domain. Topologically, residues 183–449 (HRELRPLKKL…EGGFEAVVSW (267 aa)) are cytoplasmic. Residues 243 to 449 (DAAHELRSPL…EGGFEAVVSW (207 aa)) form the Histidine kinase domain. A Phosphohistidine; by autocatalysis modification is found at histidine 246.

The protein localises to the cell inner membrane. It carries out the reaction ATP + protein L-histidine = ADP + protein N-phospho-L-histidine.. Member of a two-component regulatory system QseB/QseC. Activates the flagella regulon by activating transcription of FlhDC. May activate QseB by phosphorylation. The polypeptide is Sensor protein QseC (qseC) (Salmonella typhimurium (strain LT2 / SGSC1412 / ATCC 700720)).